The sequence spans 65 residues: Alpha-toxin Bot1 (65 aa).

Residues 2 to 64 (RDAYIAQPEN…VPIRIPGKCH (63 aa)) form the LCN-type CS-alpha/beta domain. 4 disulfides stabilise this stretch: Cys12-Cys63, Cys16-Cys36, Cys22-Cys46, and Cys26-Cys48. Phe65 carries the phenylalanine amide modification.

The protein belongs to the long (4 C-C) scorpion toxin superfamily. Sodium channel inhibitor family. Alpha subfamily. As to expression, expressed by the venom gland.

It is found in the secreted. Alpha toxins bind voltage-independently at site-3 of sodium channels (Nav) and inhibit the inactivation of the activated channels, thereby blocking neuronal transmission. In Buthus occitanus tunetanus (Common European scorpion), this protein is Alpha-toxin Bot1.